The following is a 123-amino-acid chain: Protein Wnt-3a (123 aa).

Ser1 carries O-palmitoleoyl serine lipidation. Cys89 and Cys104 are disulfide-bonded. Residue Asn90 is glycosylated (N-linked (GlcNAc...) asparagine).

It belongs to the Wnt family. Disulfide bonds have critical and distinct roles in secretion and activity. Loss of each conserved cysteine results in high molecular weight oxidized Wnt oligomers, which are formed through inter-Wnt disulfide bonding. In terms of processing, palmitoleoylation is required for efficient binding to frizzled receptors. Depalmitoleoylation leads to Wnt signaling pathway inhibition.

The protein localises to the secreted. The protein resides in the extracellular space. It is found in the extracellular matrix. Its function is as follows. Ligand for members of the frizzled family of seven transmembrane receptors. Functions in the canonical Wnt signaling pathway that results in activation of transcription factors of the TCF/LEF family. Required for normal embryonic mesoderm development and formation of caudal somites. Required for normal morphogenesis of the developing neural tube. This is Protein Wnt-3a (WNT-3A) from Pituophis melanoleucus (Pine snake).